The primary structure comprises 112 residues: Small ribosomal subunit protein bS6 (112 aa).

Belongs to the bacterial ribosomal protein bS6 family.

In terms of biological role, binds together with bS18 to 16S ribosomal RNA. The protein is Small ribosomal subunit protein bS6 (rpsF) of Chlamydia muridarum (strain MoPn / Nigg).